Consider the following 39-residue polypeptide: Photosystem II reaction center protein Y (39 aa).

Residues 5–23 traverse the membrane as a helical segment; sequence VLIVLTPLLIAGGWAVFNI.

The protein belongs to the PsbY family. As to quaternary structure, PSII is composed of 1 copy each of membrane proteins PsbA, PsbB, PsbC, PsbD, PsbE, PsbF, PsbH, PsbI, PsbJ, PsbK, PsbL, PsbM, PsbT, PsbX, PsbY, PsbZ, Psb30/Ycf12, peripheral proteins PsbO, CyanoQ (PsbQ), PsbU, PsbV and a large number of cofactors. It forms dimeric complexes.

Its subcellular location is the cellular thylakoid membrane. Functionally, loosely associated component of the core of photosystem II (PSII), it is not always seen in crystals. PSII is a light-driven water plastoquinone oxidoreductase, using light energy to abstract electrons from H(2)O, generating a proton gradient subsequently used for ATP formation. The protein is Photosystem II reaction center protein Y of Microcystis aeruginosa (strain NIES-843 / IAM M-2473).